Consider the following 238-residue polypeptide: uncharacterized protein (238 aa).

Residues 1-19 (MKINLFFVFLFELLHFVAA) form the signal peptide. Residues 20-197 (YSCEGDESAA…LALYGHLSQK (178 aa)) are Lumenal-facing. The helical transmembrane segment at 198 to 216 (YTPLGMNVAIFGISAYIMY) threads the bilayer. The Cytoplasmic portion of the chain corresponds to 217–238 (RSSKKAKQKQAAAAAAAAAKKK).

It is found in the endoplasmic reticulum membrane. This is an uncharacterized protein from Schizosaccharomyces pombe (strain 972 / ATCC 24843) (Fission yeast).